The following is a 516-amino-acid chain: MLYRFWKTGLAIFMPGCILLSSCSFRSYIPTPSLRNTVGNHNSYVNNTVPKNNFYEKFYDLTFALNFTNQKTQEFGTGWLIDWKGDETKDLNTLTIASSSIISSVSNHSLKEKQDDKLFIAYIATNLHLIDGLKNDHDYQPYNKDGNGLSFPFDQKTQSFLLGRFANPKINSKPEEMNYQVQTRLKQDAMVFIQTSTLPKTAYAGIDPINFDYHETSDESGFWTKKQSTANFPRTRTLKSYADFAVLEVPLFLDNANDAKIYQEWIRPAVQAYKELGDVENIFAKTPYAEYINNTYYLLGYPVTNNNKYQFILGQDEKWKFSQQTSVLKHYQKQPLQQRTVYVERDDGLPTLTFNEDKLTHVQGTDLINVDQITDTNLGNGLINYAGLSRFTLSYHNVEYKLFGYGTILNNTNFPGGSSGSAVFNKEKQLTSIYFGSLINVTTGNNRNVNLGLGQILRTYNTNNSKHSAPSSYDLIFGDKNTIKFYAQFAKEKQTHLWNKIQTSVNSSISFYKDKK.

The first 22 residues, 1–22, serve as a signal peptide directing secretion; that stretch reads MLYRFWKTGLAIFMPGCILLSS. Cys23 is lipidated: N-palmitoyl cysteine. Cys23 carries the S-diacylglycerol cysteine lipid modification.

Belongs to the MG067/MG068/MG395 family.

The protein localises to the cell membrane. This is an uncharacterized protein from Mycoplasma genitalium (strain ATCC 33530 / DSM 19775 / NCTC 10195 / G37) (Mycoplasmoides genitalium).